The primary structure comprises 1163 residues: Ankyrin repeat-containing protein F37A4.4 (1163 aa).

An ANK repeat occupies 856 to 885; sequence YGNTALHVATRRGYQNLVEILIKHGADRSF. Positions 929–1025 constitute a BRCT domain; that stretch reads LCVPEKFPVS…KLIEKDCDYL (97 aa).

This Caenorhabditis elegans protein is Ankyrin repeat-containing protein F37A4.4.